Consider the following 535-residue polypeptide: Dimethylaniline monooxygenase [N-oxide-forming] 2 (535 aa).

FAD is bound by residues Gly9–Ser13, Glu32, Leu40–Trp41, and Asn61–Thr62. NADP(+) contacts are provided by residues Thr60–Asn61 and Ser195–Asp198. Lys492 participates in a covalent cross-link: Glycyl lysine isopeptide (Lys-Gly) (interchain with G-Cter in SUMO). A helical transmembrane segment spans residues Ala510–Phe530.

It belongs to the FMO family. Requires FAD as cofactor. The cofactor is Mg(2+).

The protein localises to the microsome membrane. Its subcellular location is the endoplasmic reticulum membrane. Functionally, catalyzes the oxidative metabolism of numerous xenobiotics, including mainly therapeutic drugs and insecticides that contain a soft nucleophile, most commonly nitrogen and sulfur and participates to their bioactivation. The chain is Dimethylaniline monooxygenase [N-oxide-forming] 2 from Rattus norvegicus (Rat).